The sequence spans 297 residues: 4-hydroxy-tetrahydrodipicolinate synthase (297 aa).

Position 51 (Thr51) interacts with pyruvate. Tyr139 functions as the Proton donor/acceptor in the catalytic mechanism. Lys167 acts as the Schiff-base intermediate with substrate in catalysis. Val209 serves as a coordination point for pyruvate.

It belongs to the DapA family. In terms of assembly, homotetramer; dimer of dimers.

It localises to the cytoplasm. The enzyme catalyses L-aspartate 4-semialdehyde + pyruvate = (2S,4S)-4-hydroxy-2,3,4,5-tetrahydrodipicolinate + H2O + H(+). The protein operates within amino-acid biosynthesis; L-lysine biosynthesis via DAP pathway; (S)-tetrahydrodipicolinate from L-aspartate: step 3/4. Functionally, catalyzes the condensation of (S)-aspartate-beta-semialdehyde [(S)-ASA] and pyruvate to 4-hydroxy-tetrahydrodipicolinate (HTPA). In Albidiferax ferrireducens (strain ATCC BAA-621 / DSM 15236 / T118) (Rhodoferax ferrireducens), this protein is 4-hydroxy-tetrahydrodipicolinate synthase.